Reading from the N-terminus, the 95-residue chain is Signal recognition particle 19 kDa protein (95 aa).

It belongs to the SRP19 family. As to quaternary structure, part of the signal recognition particle protein translocation system, which is composed of SRP and FtsY. Archaeal SRP consists of a 7S RNA molecule of 300 nucleotides and two protein subunits: SRP54 and SRP19.

It localises to the cytoplasm. Its function is as follows. Involved in targeting and insertion of nascent membrane proteins into the cytoplasmic membrane. Binds directly to 7S RNA and mediates binding of the 54 kDa subunit of the SRP. This is Signal recognition particle 19 kDa protein from Pyrobaculum islandicum (strain DSM 4184 / JCM 9189 / GEO3).